Reading from the N-terminus, the 130-residue chain is Small ribosomal subunit protein uS11 (130 aa).

The protein belongs to the universal ribosomal protein uS11 family. As to quaternary structure, part of the 30S ribosomal subunit. Interacts with proteins S7 and S18. Binds to IF-3.

Located on the platform of the 30S subunit, it bridges several disparate RNA helices of the 16S rRNA. Forms part of the Shine-Dalgarno cleft in the 70S ribosome. In Shewanella sediminis (strain HAW-EB3), this protein is Small ribosomal subunit protein uS11.